Reading from the N-terminus, the 371-residue chain is Phospho-N-acetylmuramoyl-pentapeptide-transferase (371 aa).

9 consecutive transmembrane segments (helical) span residues 19 to 39 (LYWLLLLCLSGVALATDIYSG), 48 to 68 (IVAPLWTSTLVVTLLGFWAVP), 95 to 115 (TMGGIFFMPVALVLGWAWVAA), 119 to 139 (NLLEVSAAVLLTLCLGLVGWF), 155 to 175 (AKLRLGIELGSGLIFGLWLFL), 180 to 200 (ISGLALPFGLSLPIGVLFLAI), 227 to 247 (AIAFLGLALVVAPSWPGLMIF), 284 to 304 (AVGLITNTLWALLILSGLFLV), and 349 to 369 (VVSTFYACVAVLAVAACGLNA).

Belongs to the glycosyltransferase 4 family. MraY subfamily. Mg(2+) serves as cofactor.

The protein localises to the cell inner membrane. It catalyses the reaction UDP-N-acetyl-alpha-D-muramoyl-L-alanyl-gamma-D-glutamyl-meso-2,6-diaminopimeloyl-D-alanyl-D-alanine + di-trans,octa-cis-undecaprenyl phosphate = di-trans,octa-cis-undecaprenyl diphospho-N-acetyl-alpha-D-muramoyl-L-alanyl-D-glutamyl-meso-2,6-diaminopimeloyl-D-alanyl-D-alanine + UMP. It participates in cell wall biogenesis; peptidoglycan biosynthesis. Its function is as follows. Catalyzes the initial step of the lipid cycle reactions in the biosynthesis of the cell wall peptidoglycan: transfers peptidoglycan precursor phospho-MurNAc-pentapeptide from UDP-MurNAc-pentapeptide onto the lipid carrier undecaprenyl phosphate, yielding undecaprenyl-pyrophosphoryl-MurNAc-pentapeptide, known as lipid I. This Acaryochloris marina (strain MBIC 11017) protein is Phospho-N-acetylmuramoyl-pentapeptide-transferase.